A 200-amino-acid chain; its full sequence is Ras-related protein Rab-7b (200 aa).

GTP-binding positions include 15–22 (GALGVGKT), 34–40 (YEDYQTT), 63–67 (DTGGQ), 124–127 (NKID), and 154–155 (AK). 2 short sequence motifs (switch) span residues 28-41 (YVHK…QTTL) and 67-82 (QERF…KGSD). A Phosphoserine modification is found at S186. Residues C199 and C200 are each lipidated (S-geranylgeranyl cysteine).

It belongs to the small GTPase superfamily. Rab family.

The protein resides in the late endosome. It is found in the lysosome. The protein localises to the golgi apparatus. It localises to the trans-Golgi network. Its subcellular location is the cytoplasmic vesicle. The protein resides in the phagosome. It is found in the phagosome membrane. In terms of biological role, controls vesicular trafficking from endosomes to the trans-Golgi network (TGN). Acts as a negative regulator of TLR9 signaling and can suppress TLR9-triggered TNFA, IL6, and IFNB production in macrophages by promoting TLR9 lysosomal degradation. Also negatively regulates TLR4 signaling in macrophages by promoting lysosomal degradation of TLR4. Promotes megakaryocytic differentiation by increasing NF-kappa-B-dependent IL6 production and subsequently enhancing the association of STAT3 with GATA1. Not involved in the regulation of the EGF- and EGFR degradation pathway. This Bos taurus (Bovine) protein is Ras-related protein Rab-7b (RAB7B).